A 141-amino-acid chain; its full sequence is Nucleoside triphosphatase NudI (141 aa).

The Nudix hydrolase domain occupies 1 to 141 (MRQRTIVCPL…RVTLSQKGLL (141 aa)). The Nudix box motif lies at 38 to 59 (GGVEPVERIEEALRREIREELG).

Belongs to the Nudix hydrolase family. NudI subfamily. Monomer. Requires Mg(2+) as cofactor.

It carries out the reaction a ribonucleoside 5'-triphosphate + H2O = a ribonucleoside 5'-phosphate + diphosphate + H(+). The catalysed reaction is a 2'-deoxyribonucleoside 5'-triphosphate + H2O = a 2'-deoxyribonucleoside 5'-phosphate + diphosphate + H(+). The enzyme catalyses dUTP + H2O = dUMP + diphosphate + H(+). It catalyses the reaction dTTP + H2O = dTMP + diphosphate + H(+). It carries out the reaction dCTP + H2O = dCMP + diphosphate + H(+). Its function is as follows. Catalyzes the hydrolysis of nucleoside triphosphates, with a preference for pyrimidine deoxynucleoside triphosphates (dUTP, dTTP and dCTP). The polypeptide is Nucleoside triphosphatase NudI (Klebsiella pneumoniae (strain 342)).